The primary structure comprises 153 residues: 6,7-dimethyl-8-ribityllumazine synthase (153 aa).

5-amino-6-(D-ribitylamino)uracil contacts are provided by residues phenylalanine 21, 55–57 (AFE), and 79–81 (TVI). Residue 84–85 (AT) coordinates (2S)-2-hydroxy-3-oxobutyl phosphate. Residue histidine 87 is the Proton donor of the active site. Phenylalanine 112 contributes to the 5-amino-6-(D-ribitylamino)uracil binding site. Position 126 (arginine 126) interacts with (2S)-2-hydroxy-3-oxobutyl phosphate.

It belongs to the DMRL synthase family. Forms an icosahedral capsid composed of 60 subunits, arranged as a dodecamer of pentamers.

The catalysed reaction is (2S)-2-hydroxy-3-oxobutyl phosphate + 5-amino-6-(D-ribitylamino)uracil = 6,7-dimethyl-8-(1-D-ribityl)lumazine + phosphate + 2 H2O + H(+). Its pathway is cofactor biosynthesis; riboflavin biosynthesis; riboflavin from 2-hydroxy-3-oxobutyl phosphate and 5-amino-6-(D-ribitylamino)uracil: step 1/2. Catalyzes the formation of 6,7-dimethyl-8-ribityllumazine by condensation of 5-amino-6-(D-ribitylamino)uracil with 3,4-dihydroxy-2-butanone 4-phosphate. This is the penultimate step in the biosynthesis of riboflavin. This Bacillus anthracis (strain A0248) protein is 6,7-dimethyl-8-ribityllumazine synthase.